The following is a 474-amino-acid chain: Glutamate--tRNA ligase (474 aa).

The short motif at 9-19 is the 'HIGH' region element; that stretch reads PSPTGYLHVGG. A 'KMSKS' region motif is present at residues 240 to 244; it reads KLSKR. Lys243 serves as a coordination point for ATP.

This sequence belongs to the class-I aminoacyl-tRNA synthetase family. Glutamate--tRNA ligase type 1 subfamily. As to quaternary structure, monomer.

It localises to the cytoplasm. It carries out the reaction tRNA(Glu) + L-glutamate + ATP = L-glutamyl-tRNA(Glu) + AMP + diphosphate. In terms of biological role, catalyzes the attachment of glutamate to tRNA(Glu) in a two-step reaction: glutamate is first activated by ATP to form Glu-AMP and then transferred to the acceptor end of tRNA(Glu). The protein is Glutamate--tRNA ligase of Vibrio parahaemolyticus serotype O3:K6 (strain RIMD 2210633).